Consider the following 184-residue polypeptide: ATP-dependent protease subunit HslV (184 aa).

Residue Thr2 is part of the active site. 3 residues coordinate Na(+): Gly157, Cys160, and Thr163.

This sequence belongs to the peptidase T1B family. HslV subfamily. In terms of assembly, a double ring-shaped homohexamer of HslV is capped on each side by a ring-shaped HslU homohexamer. The assembly of the HslU/HslV complex is dependent on binding of ATP.

It localises to the cytoplasm. The enzyme catalyses ATP-dependent cleavage of peptide bonds with broad specificity.. Its activity is regulated as follows. Allosterically activated by HslU binding. Its function is as follows. Protease subunit of a proteasome-like degradation complex believed to be a general protein degrading machinery. This is ATP-dependent protease subunit HslV from Vibrio vulnificus (strain CMCP6).